The primary structure comprises 235 residues: Glucosamine-6-phosphate deaminase (235 aa).

Residue aspartate 62 is the Proton acceptor; for enolization step of the active site. Asparagine 128 acts as the For ring-opening step in catalysis. Catalysis depends on histidine 130, which acts as the Proton acceptor; for ring-opening step. The For ring-opening step role is filled by glutamate 135.

The protein belongs to the glucosamine/galactosamine-6-phosphate isomerase family. NagB subfamily.

The enzyme catalyses alpha-D-glucosamine 6-phosphate + H2O = beta-D-fructose 6-phosphate + NH4(+). It functions in the pathway amino-sugar metabolism; N-acetylneuraminate degradation; D-fructose 6-phosphate from N-acetylneuraminate: step 5/5. Catalyzes the reversible isomerization-deamination of glucosamine 6-phosphate (GlcN6P) to form fructose 6-phosphate (Fru6P) and ammonium ion. The sequence is that of Glucosamine-6-phosphate deaminase from Lactococcus lactis subsp. lactis (strain IL1403) (Streptococcus lactis).